We begin with the raw amino-acid sequence, 503 residues long: Maturase K (503 aa).

Belongs to the intron maturase 2 family. MatK subfamily.

It is found in the plastid. The protein localises to the chloroplast. Its function is as follows. Usually encoded in the trnK tRNA gene intron. Probably assists in splicing its own and other chloroplast group II introns. The protein is Maturase K of Syzygium anisatum (Aniseed myrtle).